The primary structure comprises 627 residues: 1-deoxy-D-xylulose-5-phosphate synthase (627 aa).

Thiamine diphosphate-binding positions include histidine 75 and 116-118; that span reads AHS. Mg(2+) is bound at residue aspartate 147. Thiamine diphosphate-binding positions include 148 to 149, asparagine 177, tyrosine 284, and glutamate 366; that span reads GA. A Mg(2+)-binding site is contributed by asparagine 177.

The protein belongs to the transketolase family. DXPS subfamily. Homodimer. Mg(2+) is required as a cofactor. It depends on thiamine diphosphate as a cofactor.

The catalysed reaction is D-glyceraldehyde 3-phosphate + pyruvate + H(+) = 1-deoxy-D-xylulose 5-phosphate + CO2. It functions in the pathway metabolic intermediate biosynthesis; 1-deoxy-D-xylulose 5-phosphate biosynthesis; 1-deoxy-D-xylulose 5-phosphate from D-glyceraldehyde 3-phosphate and pyruvate: step 1/1. Functionally, catalyzes the acyloin condensation reaction between C atoms 2 and 3 of pyruvate and glyceraldehyde 3-phosphate to yield 1-deoxy-D-xylulose-5-phosphate (DXP). This Bordetella petrii (strain ATCC BAA-461 / DSM 12804 / CCUG 43448) protein is 1-deoxy-D-xylulose-5-phosphate synthase.